Consider the following 293-residue polypeptide: Protease HtpX (293 aa).

The next 2 membrane-spanning stretches (helical) occupy residues 4 to 24 (IALF…VLSL) and 32 to 52 (VTGL…VSLL). H139 provides a ligand contact to Zn(2+). E140 is a catalytic residue. H143 serves as a coordination point for Zn(2+). Helical transmembrane passes span 158-178 (VVNT…AGFL) and 193-213 (LIYF…ASII). E222 is a binding site for Zn(2+).

This sequence belongs to the peptidase M48B family. The cofactor is Zn(2+).

It localises to the cell inner membrane. In Cronobacter sakazakii (strain ATCC BAA-894) (Enterobacter sakazakii), this protein is Protease HtpX.